The following is a 396-amino-acid chain: Phosphopentomutase (396 aa).

Mn(2+) contacts are provided by D14, D286, H291, D327, H328, and H339.

This sequence belongs to the phosphopentomutase family. The cofactor is Mn(2+).

It is found in the cytoplasm. It carries out the reaction 2-deoxy-alpha-D-ribose 1-phosphate = 2-deoxy-D-ribose 5-phosphate. The enzyme catalyses alpha-D-ribose 1-phosphate = D-ribose 5-phosphate. The protein operates within carbohydrate degradation; 2-deoxy-D-ribose 1-phosphate degradation; D-glyceraldehyde 3-phosphate and acetaldehyde from 2-deoxy-alpha-D-ribose 1-phosphate: step 1/2. Isomerase that catalyzes the conversion of deoxy-ribose 1-phosphate (dRib-1-P) and ribose 1-phosphate (Rib-1-P) to deoxy-ribose 5-phosphate (dRib-5-P) and ribose 5-phosphate (Rib-5-P), respectively. The sequence is that of Phosphopentomutase from Staphylococcus carnosus (strain TM300).